The sequence spans 1065 residues: Cellulose synthase A catalytic subunit 3 [UDP-forming] (1065 aa).

Residues 1–260 (MESEGETAGK…PSSRINPYRM (260 aa)) are Cytoplasmic-facing. Ser3 is modified (phosphoserine). Cys20, Cys23, Cys39, Cys42, Cys47, Cys50, Cys62, and Cys65 together coordinate Zn(2+). Residues 20-66 (CQICSDNVGKTVDGDRFVACDICSFPVCRPCYEYERKDGNQSCPQCK) form an RING-type; degenerate zinc finger. Phosphoserine is present on residues Ser151, Ser211, and Ser216. A helical membrane pass occupies residues 261–281 (VIMLRLVILCLFLHYRITNPV). Residues 282–283 (PN) are Extracellular-facing. A helical membrane pass occupies residues 284–304 (AFALWLVSVICEIWFALSWIL). At 305–842 (DQFPKWFPVN…LERFAYVNTT (538 aa)) the chain is on the cytoplasmic side. UDP-alpha-D-glucose contacts are provided by Ser343, Lys349, Glu350, and Asp379. Asp379 is an active-site residue. The stretch at 433-457 (VKDRRAMKREYEEFKIRINALVSKA) forms a coiled coil. Lys520 provides a ligand contact to UDP-alpha-D-glucose. Residues Lys521 and Asp545 each contribute to the Mn(2+) site. The disordered stretch occupies residues 643-672 (SKLCGGSRKKNSKAKKESDKKKSGRHTDST). The segment covering 656-670 (AKKESDKKKSGRHTD) has biased composition (basic and acidic residues). Asp765 is a catalytic residue. The chain crosses the membrane as a helical span at residues 843 to 863 (IYPITSIPLLMYCTLPAVCLF). Residues 864-874 (TNQFIIPQISN) lie on the Extracellular side of the membrane. Residues 875–895 (IASIWFLSLFLSIFATGILEM) traverse the membrane as a helical segment. At 896–910 (RWSGVGIDEWWRNEQ) the chain is on the cytoplasmic side. A helical membrane pass occupies residues 911 to 931 (FWVIGGVSAHLFAVFQGILKV). The Extracellular portion of the chain corresponds to 932–961 (LAGIDTNFTVTSKASDEDGDFAELYLFKWT). Asn938 carries an N-linked (GlcNAc...) asparagine glycan. Residues 962–982 (TLLIPPTTLLIVNLVGVVAGV) form a helical membrane-spanning segment. Residues 983 to 993 (SYAINSGYQSW) are Cytoplasmic-facing. A helical transmembrane segment spans residues 994–1014 (GPLFGKLFFAFWVIVHLYPFL). The Extracellular segment spans residues 1015–1023 (KGLMGRQNR). A helical membrane pass occupies residues 1024-1044 (TPTIVVVWSVLLASIFSLLWV). The Cytoplasmic portion of the chain corresponds to 1045 to 1065 (RIDPFTSRVTGPDILECGINC).

This sequence belongs to the glycosyltransferase 2 family. Plant cellulose synthase subfamily. Homodimer. Interacts with CESA1 and CESA6. Interacts with STL1 and STL2, but not with GOT1. Binds to CSI1 and CSI3. Interacts with PAT24/TIP1. It depends on Zn(2+) as a cofactor. Mn(2+) is required as a cofactor. In terms of processing, palmitoylated, in part by PAT24/TIP1. Expressed in young plants, flowers and roots, and to a lower extent in leaves and stems. Localized in all cells except meristematic cells. Accumulates particularly in root caps, root hairs, epidermal layer, midveins of leaves and anthers. Not present in old tissues.

It is found in the cell membrane. Its subcellular location is the golgi apparatus membrane. It catalyses the reaction [(1-&gt;4)-beta-D-glucosyl](n) + UDP-alpha-D-glucose = [(1-&gt;4)-beta-D-glucosyl](n+1) + UDP + H(+). It participates in glycan metabolism; plant cellulose biosynthesis. Functionally, catalytic subunit of cellulose synthase terminal complexes ('rosettes'), required for beta-1,4-glucan microfibril crystallization, a major mechanism of the cell wall formation. Involved in the primary cell wall formation, especially in roots. This is Cellulose synthase A catalytic subunit 3 [UDP-forming] from Arabidopsis thaliana (Mouse-ear cress).